Consider the following 200-residue polypeptide: Large ribosomal subunit protein uL4 (200 aa).

The tract at residues 43 to 65 is disordered; sequence RAQKTRSEVSGGGAKPWRQKGTG.

This sequence belongs to the universal ribosomal protein uL4 family. In terms of assembly, part of the 50S ribosomal subunit.

Its function is as follows. One of the primary rRNA binding proteins, this protein initially binds near the 5'-end of the 23S rRNA. It is important during the early stages of 50S assembly. It makes multiple contacts with different domains of the 23S rRNA in the assembled 50S subunit and ribosome. In terms of biological role, forms part of the polypeptide exit tunnel. This Aliivibrio salmonicida (strain LFI1238) (Vibrio salmonicida (strain LFI1238)) protein is Large ribosomal subunit protein uL4.